Consider the following 373-residue polypeptide: 3-dehydroquinate synthase (373 aa).

NAD(+)-binding positions include 67 to 72 (EGEETK), 101 to 105 (GVILD), 125 to 126 (TT), lysine 138, and lysine 147. Residues glutamate 180, histidine 240, and histidine 256 each coordinate Zn(2+).

This sequence belongs to the sugar phosphate cyclases superfamily. Dehydroquinate synthase family. The cofactor is NAD(+). Requires Co(2+) as cofactor. It depends on Zn(2+) as a cofactor.

It localises to the cytoplasm. The catalysed reaction is 7-phospho-2-dehydro-3-deoxy-D-arabino-heptonate = 3-dehydroquinate + phosphate. It participates in metabolic intermediate biosynthesis; chorismate biosynthesis; chorismate from D-erythrose 4-phosphate and phosphoenolpyruvate: step 2/7. In terms of biological role, catalyzes the conversion of 3-deoxy-D-arabino-heptulosonate 7-phosphate (DAHP) to dehydroquinate (DHQ). The protein is 3-dehydroquinate synthase of Chlamydia trachomatis serovar L2 (strain ATCC VR-902B / DSM 19102 / 434/Bu).